Reading from the N-terminus, the 672-residue chain is tRNA 5-methylaminomethyl-2-thiouridine biosynthesis bifunctional protein MnmC (672 aa).

The interval 1 to 235 (MTRVLEPAEP…KRDMTVARFA (235 aa)) is tRNA (mnm(5)s(2)U34)-methyltransferase. Positions 259 to 672 (IGAGLAGCAV…SAGPGVDAAG (414 aa)) are FAD-dependent cmnm(5)s(2)U34 oxidoreductase.

It in the N-terminal section; belongs to the methyltransferase superfamily. tRNA (mnm(5)s(2)U34)-methyltransferase family. In the C-terminal section; belongs to the DAO family. FAD is required as a cofactor.

Its subcellular location is the cytoplasm. It carries out the reaction 5-aminomethyl-2-thiouridine(34) in tRNA + S-adenosyl-L-methionine = 5-methylaminomethyl-2-thiouridine(34) in tRNA + S-adenosyl-L-homocysteine + H(+). Catalyzes the last two steps in the biosynthesis of 5-methylaminomethyl-2-thiouridine (mnm(5)s(2)U) at the wobble position (U34) in tRNA. Catalyzes the FAD-dependent demodification of cmnm(5)s(2)U34 to nm(5)s(2)U34, followed by the transfer of a methyl group from S-adenosyl-L-methionine to nm(5)s(2)U34, to form mnm(5)s(2)U34. The protein is tRNA 5-methylaminomethyl-2-thiouridine biosynthesis bifunctional protein MnmC of Cupriavidus metallidurans (strain ATCC 43123 / DSM 2839 / NBRC 102507 / CH34) (Ralstonia metallidurans).